The sequence spans 715 residues: Phosphoribosylformylglycinamidine synthase subunit PurL (715 aa).

Histidine 33 is an active-site residue. Tyrosine 36 contacts ATP. Glutamate 77 contacts Mg(2+). Residues 78–81 and arginine 100 each bind substrate; that span reads SHNH. The active-site Proton acceptor is the histidine 79. Aspartate 101 provides a ligand contact to Mg(2+). Glutamine 225 is a binding site for substrate. Position 253 (aspartate 253) interacts with Mg(2+). Residue 297–299 participates in substrate binding; it reads ESQ. Residues asparagine 475 and glycine 512 each contribute to the ATP site. Residue asparagine 513 participates in Mg(2+) binding. Serine 515 provides a ligand contact to substrate.

This sequence belongs to the FGAMS family. Monomer. Part of the FGAM synthase complex composed of 1 PurL, 1 PurQ and 2 PurS subunits.

Its subcellular location is the cytoplasm. It carries out the reaction N(2)-formyl-N(1)-(5-phospho-beta-D-ribosyl)glycinamide + L-glutamine + ATP + H2O = 2-formamido-N(1)-(5-O-phospho-beta-D-ribosyl)acetamidine + L-glutamate + ADP + phosphate + H(+). Its pathway is purine metabolism; IMP biosynthesis via de novo pathway; 5-amino-1-(5-phospho-D-ribosyl)imidazole from N(2)-formyl-N(1)-(5-phospho-D-ribosyl)glycinamide: step 1/2. Part of the phosphoribosylformylglycinamidine synthase complex involved in the purines biosynthetic pathway. Catalyzes the ATP-dependent conversion of formylglycinamide ribonucleotide (FGAR) and glutamine to yield formylglycinamidine ribonucleotide (FGAM) and glutamate. The FGAM synthase complex is composed of three subunits. PurQ produces an ammonia molecule by converting glutamine to glutamate. PurL transfers the ammonia molecule to FGAR to form FGAM in an ATP-dependent manner. PurS interacts with PurQ and PurL and is thought to assist in the transfer of the ammonia molecule from PurQ to PurL. The protein is Phosphoribosylformylglycinamidine synthase subunit PurL of Methanosarcina acetivorans (strain ATCC 35395 / DSM 2834 / JCM 12185 / C2A).